Here is a 488-residue protein sequence, read N- to C-terminus: Cysteine--tRNA ligase (488 aa).

Residue cysteine 29 coordinates Zn(2+). The 'HIGH' region motif lies at 31-41; the sequence is ATVQGMPHVGH. Cysteine 227, histidine 252, and glutamate 256 together coordinate Zn(2+). The 'KMSKS' region signature appears at 283-287; that stretch reads KMSKS. Residue lysine 286 coordinates ATP.

The protein belongs to the class-I aminoacyl-tRNA synthetase family. As to quaternary structure, monomer. Zn(2+) is required as a cofactor.

Its subcellular location is the cytoplasm. The enzyme catalyses tRNA(Cys) + L-cysteine + ATP = L-cysteinyl-tRNA(Cys) + AMP + diphosphate. This Pseudarthrobacter chlorophenolicus (strain ATCC 700700 / DSM 12829 / CIP 107037 / JCM 12360 / KCTC 9906 / NCIMB 13794 / A6) (Arthrobacter chlorophenolicus) protein is Cysteine--tRNA ligase.